The chain runs to 926 residues: Protein O-mannosyl-transferase Tmtc3 (926 aa).

Residues 1–26 (MSTNPNPGIHQYAPSTLPREREREGA) are disordered. The Cytoplasmic portion of the chain corresponds to 1–36 (MSTNPNPGIHQYAPSTLPREREREGATNSPQRNLLE). The chain crosses the membrane as a helical span at residues 37 to 57 (FLCICVACIVCYYNSTQCGLV). At 58–114 (FDDISAIRDNKDLRPHTPLINVFLNDFWGTPMRKEQSHKSYRPLTVLTFRFNYLLHA) the chain is on the extracellular side. Residues 115 to 135 (LEPFGYHLVNLLLHLSVCLLW) form a helical membrane-spanning segment. Residues 136–169 (RRVCRLLLRQCAASGSNAISAPSSSSVSQLNTCA) are Cytoplasmic-facing. The helical transmembrane segment at 170-190 (FVASLLFAVHPVHTEAVTGVV) threads the bilayer. At 191 to 192 (GR) the chain is on the extracellular side. The chain crosses the membrane as a helical span at residues 193 to 213 (AELLSSICFLAAFLSYAKSVG). The Cytoplasmic segment spans residues 214–222 (DSGCPRRTN). 2 helical membrane passes run 223-239 (WLTL…ASML) and 240-259 (CKEQ…LFVV). At 260–303 (HQLRPLHLCHFVLRLFDERTEQQSPKLANPSGIRRWSSSTLWKR) the chain is on the cytoplasmic side. Residues 304–324 (LSFLVGITLTLLVGRVYVMGS) traverse the membrane as a helical segment. Residues 325-345 (QLPIFTRFDNPASAADTPERQ) are Extracellular-facing. The helical transmembrane segment at 346–366 (LTYGYLIYLNCWLLLCPSLLC) threads the bilayer. Over 367-384 (CDWTMGTVPLLQGFTDSR) the chain is Cytoplasmic. Residues 385 to 405 (NITTLLTFLALGAMVAKTCFT) traverse the membrane as a helical segment. At 406 to 419 (RNLALSRTLIMCLG) the chain is on the extracellular side. Residues 420–440 (WMVLPFLPASNLFFPVGFVVA) traverse the membrane as a helical segment. The Cytoplasmic portion of the chain corresponds to 441–442 (ER). The helical transmembrane segment at 443–463 (ILYMPSMGYCLLVAYGFEQLQ) threads the bilayer. The Extracellular portion of the chain corresponds to 464-926 (RRGSLSWQRF…RPTHKSRKRS (463 aa)). TPR repeat units lie at residues 514-547 (AKLY…QTDD), 548-581 (IGAH…FPQA), 596-630 (LNVF…RSDY), 631-664 (VQAY…DNEN), 665-698 (ADIY…YPEH), 736-769 (EKVY…KADF), 770-803 (RSAL…HPSH), 805-838 (KGLI…DPHN), and 839-872 (TQGL…APAE). 2 N-linked (GlcNAc...) asparagine glycosylation sites follow: Asn609 and Asn645.

This sequence belongs to the TMTC family.

It is found in the membrane. The protein localises to the endoplasmic reticulum. It carries out the reaction a di-trans,poly-cis-dolichyl beta-D-mannosyl phosphate + L-seryl-[protein] = 3-O-(alpha-D-mannosyl)-L-seryl-[protein] + a di-trans,poly-cis-dolichyl phosphate + H(+). The enzyme catalyses a di-trans,poly-cis-dolichyl beta-D-mannosyl phosphate + L-threonyl-[protein] = 3-O-(alpha-D-mannosyl)-L-threonyl-[protein] + a di-trans,poly-cis-dolichyl phosphate + H(+). The protein operates within protein modification; protein glycosylation. In terms of biological role, transfers mannosyl residues to the hydroxyl group of serine or threonine residues. In Drosophila melanogaster (Fruit fly), this protein is Protein O-mannosyl-transferase Tmtc3.